Consider the following 259-residue polypeptide: MSQIHPTALISPSATIDETATIGPYCIVGDEVTIGAHTVLHRHVVVTRLTRIGEHNQFYQFSSIGEDPQDLKYAGERTWLEIGDHNTIREACSLHRGTEQDGGLTKIGSHNLLMVNTHVAHDCLIGDHNVLANNVGVAGHVTIGNHIIVGGNSGIHQFCTIDDYSLVGGATLVLKDVAAFTMVSGNPAKAHGLNVEGMRRKGWSKDSIDVLRQAYRVVFRSGLTTVQALEVLKQDLLPKEQKIEFLIDSLQKSRRGVVR.

The protein belongs to the transferase hexapeptide repeat family. LpxA subfamily. As to quaternary structure, homotrimer.

Its subcellular location is the cytoplasm. It catalyses the reaction a (3R)-hydroxyacyl-[ACP] + UDP-N-acetyl-alpha-D-glucosamine = a UDP-3-O-[(3R)-3-hydroxyacyl]-N-acetyl-alpha-D-glucosamine + holo-[ACP]. It functions in the pathway glycolipid biosynthesis; lipid IV(A) biosynthesis; lipid IV(A) from (3R)-3-hydroxytetradecanoyl-[acyl-carrier-protein] and UDP-N-acetyl-alpha-D-glucosamine: step 1/6. In terms of biological role, involved in the biosynthesis of lipid A, a phosphorylated glycolipid that anchors the lipopolysaccharide to the outer membrane of the cell. The sequence is that of Acyl-[acyl-carrier-protein]--UDP-N-acetylglucosamine O-acyltransferase from Psychrobacter arcticus (strain DSM 17307 / VKM B-2377 / 273-4).